Here is a 110-residue protein sequence, read N- to C-terminus: uncharacterized protein (110 aa).

This is an uncharacterized protein from Methanocaldococcus jannaschii (strain ATCC 43067 / DSM 2661 / JAL-1 / JCM 10045 / NBRC 100440) (Methanococcus jannaschii).